The sequence spans 567 residues: Phosphoglucomutase-like protein 5 (567 aa).

Residues 1–26 (MEGSPIPVLTVPTAPYEDQRPAGGGG) are disordered. A Phosphothreonine modification is found at T120. A Phosphoserine modification is found at S122.

This sequence belongs to the phosphohexose mutase family. Interacts with DMD/dystrophin; the interaction is direct. Interacts with UTRN/utrophin. As to expression, detected in smooth and cardiac muscle at high levels and in skeletal muscle at low level. Present in other tissues due to vascular or other smooth muscle component. Low levels are present in liver, kidney, skin and brain (at protein level).

The protein resides in the cell junction. It localises to the adherens junction. Its subcellular location is the cytoplasm. It is found in the cytoskeleton. The protein localises to the cell membrane. The protein resides in the sarcolemma. Functionally, component of adherens-type cell-cell and cell-matrix junctions. Has no phosphoglucomutase activity in vitro. The chain is Phosphoglucomutase-like protein 5 from Homo sapiens (Human).